Reading from the N-terminus, the 472-residue chain is uncharacterized protein (472 aa).

The next 6 membrane-spanning stretches (helical) occupy residues 4–24 (IIIL…FSVI), 27–47 (APIC…LPFF), 56–76 (AGFI…GKVV), 99–119 (ILAI…LFVV), 140–160 (LIPG…LPGT), and 176–196 (IYAA…AGML). Positions 209–229 (GEGYGGFDSQNAPAPESIESA) are disordered. The segment covering 220–229 (APAPESIESA) has biased composition (low complexity). Transmembrane regions (helical) follow at residues 240–260 (ALAF…TIYL), 286–306 (AAAI…TILF), 323–343 (IGGA…GGII), 372–392 (TALA…LSAM), and 448–468 (IFAI…IYSL).

It belongs to the CitM (TC 2.A.11) transporter family.

The protein localises to the cell membrane. This is an uncharacterized protein from Bacillus subtilis (strain 168).